The sequence spans 192 residues: Ubiquitin-conjugating enzyme E2 T (192 aa).

The region spanning 2–152 is the UBC core domain; the sequence is QRVSRLKREL…AKKWTEKHAL (151 aa). Catalysis depends on Cys86, which acts as the Glycyl thioester intermediate. Residues 150 to 192 form a disordered region; the sequence is HALPAPQGSDKESQEKSGSSEGTSHKRKSAEIAEESKKPCREP. Basic and acidic residues predominate over residues 178–192; sequence SAEIAEESKKPCREP.

The protein belongs to the ubiquitin-conjugating enzyme family.

It localises to the nucleus. The enzyme catalyses S-ubiquitinyl-[E1 ubiquitin-activating enzyme]-L-cysteine + [E2 ubiquitin-conjugating enzyme]-L-cysteine = [E1 ubiquitin-activating enzyme]-L-cysteine + S-ubiquitinyl-[E2 ubiquitin-conjugating enzyme]-L-cysteine.. It functions in the pathway protein modification; protein ubiquitination. Functionally, accepts ubiquitin from the E1 complex and catalyzes its covalent attachment to other proteins. Catalyzes monoubiquitination. Involved in DNA repair. This Xenopus laevis (African clawed frog) protein is Ubiquitin-conjugating enzyme E2 T (ube2t).